A 241-amino-acid chain; its full sequence is Aspartate/glutamate leucyltransferase (241 aa).

Belongs to the R-transferase family. Bpt subfamily.

The protein resides in the cytoplasm. It catalyses the reaction N-terminal L-glutamyl-[protein] + L-leucyl-tRNA(Leu) = N-terminal L-leucyl-L-glutamyl-[protein] + tRNA(Leu) + H(+). It carries out the reaction N-terminal L-aspartyl-[protein] + L-leucyl-tRNA(Leu) = N-terminal L-leucyl-L-aspartyl-[protein] + tRNA(Leu) + H(+). Functions in the N-end rule pathway of protein degradation where it conjugates Leu from its aminoacyl-tRNA to the N-termini of proteins containing an N-terminal aspartate or glutamate. The sequence is that of Aspartate/glutamate leucyltransferase from Parvibaculum lavamentivorans (strain DS-1 / DSM 13023 / NCIMB 13966).